A 372-amino-acid polypeptide reads, in one-letter code: Chaperone protein DnaJ (372 aa).

One can recognise a J domain in the interval 5-70; that stretch reads DYYEVLGVSK…QKRAAYDQYG (66 aa). Residues 127–205 form a CR-type zinc finger; that stretch reads GVTKEIRIPT…CHGHGRVERY (79 aa). Cys140, Cys143, Cys157, Cys160, Cys179, Cys182, Cys193, and Cys196 together coordinate Zn(2+). CXXCXGXG motif repeat units lie at residues 140–147, 157–164, 179–186, and 193–200; these read CDICHGSG, CSTCQGAG, CPHCHGRG, and CHKCHGHG.

This sequence belongs to the DnaJ family. As to quaternary structure, homodimer. It depends on Zn(2+) as a cofactor.

Its subcellular location is the cytoplasm. Participates actively in the response to hyperosmotic and heat shock by preventing the aggregation of stress-denatured proteins and by disaggregating proteins, also in an autonomous, DnaK-independent fashion. Unfolded proteins bind initially to DnaJ; upon interaction with the DnaJ-bound protein, DnaK hydrolyzes its bound ATP, resulting in the formation of a stable complex. GrpE releases ADP from DnaK; ATP binding to DnaK triggers the release of the substrate protein, thus completing the reaction cycle. Several rounds of ATP-dependent interactions between DnaJ, DnaK and GrpE are required for fully efficient folding. Also involved, together with DnaK and GrpE, in the DNA replication of plasmids through activation of initiation proteins. The chain is Chaperone protein DnaJ from Photorhabdus laumondii subsp. laumondii (strain DSM 15139 / CIP 105565 / TT01) (Photorhabdus luminescens subsp. laumondii).